A 153-amino-acid polypeptide reads, in one-letter code: MVFEGHLVGTGLKVGVVVGRFNEFITSKLLGGALDGLKRHGVEENDIDVAWVPGAFEIPLIAKKMASSGKYDAVITLGTVIRGATTHYDYVCNEVAKGVASLSLQMDIPVIFGVLTTETIEQAIERAGTKAGNKGYESAVAAIEMAHLSKQWA.

Residues Phe-21, 55–57 (AFE), and 79–81 (TVI) each bind 5-amino-6-(D-ribitylamino)uracil. 84-85 (AT) contributes to the (2S)-2-hydroxy-3-oxobutyl phosphate binding site. Catalysis depends on His-87, which acts as the Proton donor. Phe-112 contacts 5-amino-6-(D-ribitylamino)uracil. Position 126 (Arg-126) interacts with (2S)-2-hydroxy-3-oxobutyl phosphate.

The protein belongs to the DMRL synthase family. Forms an icosahedral capsid composed of 60 subunits, arranged as a dodecamer of pentamers.

The catalysed reaction is (2S)-2-hydroxy-3-oxobutyl phosphate + 5-amino-6-(D-ribitylamino)uracil = 6,7-dimethyl-8-(1-D-ribityl)lumazine + phosphate + 2 H2O + H(+). The protein operates within cofactor biosynthesis; riboflavin biosynthesis; riboflavin from 2-hydroxy-3-oxobutyl phosphate and 5-amino-6-(D-ribitylamino)uracil: step 1/2. Functionally, catalyzes the formation of 6,7-dimethyl-8-ribityllumazine by condensation of 5-amino-6-(D-ribitylamino)uracil with 3,4-dihydroxy-2-butanone 4-phosphate. This is the penultimate step in the biosynthesis of riboflavin. This Bacillus cereus (strain G9842) protein is 6,7-dimethyl-8-ribityllumazine synthase.